The primary structure comprises 410 residues: Eukaryotic initiation factor 4A (410 aa).

A Q motif motif is present at residues 37–65 (ESFDSMGLQENLLRGIYAYGFEKPSAIQQ). One can recognise a Helicase ATP-binding domain in the interval 68-238 (IVPFCKGLDV…RKFMNKPVRI (171 aa)). 81–88 (AQSGTGKT) provides a ligand contact to ATP. The short motif at 186 to 189 (DEAD) is the DEAD box element. Residues 249–410 (GIKQFYVNID…ELPANVADLL (162 aa)) form the Helicase C-terminal domain.

This sequence belongs to the DEAD box helicase family. eIF4A subfamily. As to quaternary structure, eIF4F is a multi-subunit complex, the composition of which varies with external and internal environmental conditions. It is composed of at least EIF4A, EIF4E and EIF4G.

The catalysed reaction is ATP + H2O = ADP + phosphate + H(+). In terms of biological role, ATP-dependent RNA helicase which is a subunit of the eIF4F complex involved in cap recognition and is required for mRNA binding to ribosome. In the current model of translation initiation, eIF4A unwinds RNA secondary structures in the 5'-UTR of mRNAs which is necessary to allow efficient binding of the small ribosomal subunit, and subsequent scanning for the initiator codon. In Zea mays (Maize), this protein is Eukaryotic initiation factor 4A.